Consider the following 521-residue polypeptide: Cytochrome P450 1A1 (521 aa).

Phe229 contributes to the substrate binding site. Cys463 serves as a coordination point for heme.

The protein belongs to the cytochrome P450 family. The cofactor is heme.

The protein resides in the endoplasmic reticulum membrane. It is found in the microsome membrane. It carries out the reaction an organic molecule + reduced [NADPH--hemoprotein reductase] + O2 = an alcohol + oxidized [NADPH--hemoprotein reductase] + H2O + H(+). Its function is as follows. Cytochromes P450 are a group of heme-thiolate monooxygenases. They oxidize a variety of structurally unrelated compounds, including steroids, fatty acids, and xenobiotics. The polypeptide is Cytochrome P450 1A1 (cyp1a1) (Opsanus tau (Oyster toadfish)).